Here is a 455-residue protein sequence, read N- to C-terminus: Argininosuccinate lyase (455 aa).

It belongs to the lyase 1 family. Argininosuccinate lyase subfamily.

It is found in the cytoplasm. It carries out the reaction 2-(N(omega)-L-arginino)succinate = fumarate + L-arginine. The protein operates within amino-acid biosynthesis; L-arginine biosynthesis; L-arginine from L-ornithine and carbamoyl phosphate: step 3/3. This Caulobacter sp. (strain K31) protein is Argininosuccinate lyase.